We begin with the raw amino-acid sequence, 78 residues long: Sec-independent protein translocase protein TatA (78 aa).

A helical transmembrane segment spans residues 1-21 (MGGISIWQLLIIAVIVVLLFG). Residues 47-59 (ESEKKDADFEPKS) are compositionally biased toward basic and acidic residues. Residues 47–78 (ESEKKDADFEPKSLEQQSKQAATESKKDKEQA) are disordered. Residues 60–69 (LEQQSKQAAT) show a composition bias toward polar residues.

This sequence belongs to the TatA/E family. In terms of assembly, the Tat system comprises two distinct complexes: a TatABC complex, containing multiple copies of TatA, TatB and TatC subunits, and a separate TatA complex, containing only TatA subunits. Substrates initially bind to the TatABC complex, which probably triggers association of the separate TatA complex to form the active translocon.

It is found in the cell inner membrane. In terms of biological role, part of the twin-arginine translocation (Tat) system that transports large folded proteins containing a characteristic twin-arginine motif in their signal peptide across membranes. TatA could form the protein-conducting channel of the Tat system. The polypeptide is Sec-independent protein translocase protein TatA (Vibrio vulnificus (strain CMCP6)).